The sequence spans 103 residues: MNNSEFSKIAETTIAYIAEKIEEQDKEASIDVDLQGDILNLDTDKGVYVINKQSAAKEIWLSSPVSGPYHFFYEQGEWTNRAGLELMAILTEELNIKFDTRPT.

This sequence belongs to the frataxin family.

Involved in iron-sulfur (Fe-S) cluster assembly. May act as a regulator of Fe-S biogenesis. The chain is Iron-sulfur cluster assembly protein CyaY from Rickettsia africae (strain ESF-5).